We begin with the raw amino-acid sequence, 1603 residues long: Pentafunctional AROM polypeptide (1603 aa).

A 3-dehydroquinate synthase region spans residues 1-384 (MGVPTKISIL…YEPRASTVSN (384 aa)). NAD(+)-binding positions include 44–46 (DTN), 81–84 (ESSK), 114–116 (GGV), and D119. A 7-phospho-2-dehydro-3-deoxy-D-arabino-heptonate-binding site is contributed by R130. 139-140 (TT) serves as a coordination point for NAD(+). The 7-phospho-2-dehydro-3-deoxy-D-arabino-heptonate site is built by D146 and K152. K161 lines the NAD(+) pocket. N162 contributes to the 7-phospho-2-dehydro-3-deoxy-D-arabino-heptonate binding site. NAD(+) contacts are provided by residues 179–182 (FLNT) and N190. E194 serves as a coordination point for Zn(2+). 7-phospho-2-dehydro-3-deoxy-D-arabino-heptonate-binding positions include 194 to 197 (EVIK) and K250. E260 functions as the Proton acceptor; for 3-dehydroquinate synthase activity in the catalytic mechanism. 7-phospho-2-dehydro-3-deoxy-D-arabino-heptonate contacts are provided by residues 264-268 (RNLLN) and H271. Residue H271 coordinates Zn(2+). Catalysis depends on H275, which acts as the Proton acceptor; for 3-dehydroquinate synthase activity. The 7-phospho-2-dehydro-3-deoxy-D-arabino-heptonate site is built by H287 and K356. Position 287 (H287) interacts with Zn(2+). The segment at 397–842 (VYPGFPKSLN…WNTLAQTFKV (446 aa)) is EPSP synthase. Catalysis depends on C824, which acts as the For EPSP synthase activity. Residues 872 to 1064 (AASIFIIGMR…RRKENTFFVS (193 aa)) form a shikimate kinase region. Residue 879–886 (GMRGAGKT) participates in ATP binding. The segment at 1065–1285 (LTFPDLTPAS…AAPGQLSARE (221 aa)) is 3-dehydroquinase. The active-site Proton acceptor; for 3-dehydroquinate dehydratase activity is the H1188. K1216 functions as the Schiff-base intermediate with substrate; for 3-dehydroquinate dehydratase activity in the catalytic mechanism. The tract at residues 1298–1603 (AKKFAVIGKP…GVSSSDDTIS (306 aa)) is shikimate dehydrogenase.

The protein in the N-terminal section; belongs to the sugar phosphate cyclases superfamily. Dehydroquinate synthase family. This sequence in the 2nd section; belongs to the EPSP synthase family. It in the 3rd section; belongs to the shikimate kinase family. In the 4th section; belongs to the type-I 3-dehydroquinase family. The protein in the C-terminal section; belongs to the shikimate dehydrogenase family. In terms of assembly, homodimer. The cofactor is Zn(2+).

The protein localises to the cytoplasm. It carries out the reaction 7-phospho-2-dehydro-3-deoxy-D-arabino-heptonate = 3-dehydroquinate + phosphate. The enzyme catalyses 3-dehydroquinate = 3-dehydroshikimate + H2O. The catalysed reaction is shikimate + NADP(+) = 3-dehydroshikimate + NADPH + H(+). It catalyses the reaction shikimate + ATP = 3-phosphoshikimate + ADP + H(+). It carries out the reaction 3-phosphoshikimate + phosphoenolpyruvate = 5-O-(1-carboxyvinyl)-3-phosphoshikimate + phosphate. The protein operates within metabolic intermediate biosynthesis; chorismate biosynthesis; chorismate from D-erythrose 4-phosphate and phosphoenolpyruvate: step 2/7. Its pathway is metabolic intermediate biosynthesis; chorismate biosynthesis; chorismate from D-erythrose 4-phosphate and phosphoenolpyruvate: step 3/7. It participates in metabolic intermediate biosynthesis; chorismate biosynthesis; chorismate from D-erythrose 4-phosphate and phosphoenolpyruvate: step 4/7. It functions in the pathway metabolic intermediate biosynthesis; chorismate biosynthesis; chorismate from D-erythrose 4-phosphate and phosphoenolpyruvate: step 5/7. The protein operates within metabolic intermediate biosynthesis; chorismate biosynthesis; chorismate from D-erythrose 4-phosphate and phosphoenolpyruvate: step 6/7. Its function is as follows. The AROM polypeptide catalyzes 5 consecutive enzymatic reactions in prechorismate polyaromatic amino acid biosynthesis. The chain is Pentafunctional AROM polypeptide from Paracoccidioides brasiliensis (strain Pb03).